A 135-amino-acid polypeptide reads, in one-letter code: MPTINQLVRKGRHSKVTKSKSPALNYSYNSMKKESVFNPAPQMRGVATRVGTMTPKKPNSALRKYARVRLSNLIEVTAYIPGEGHNLQEHSVVLIRGGRVKDLPGVRYHIVRGALDTAGVEGRKQSRSKYGTKKD.

The disordered stretch occupies residues 1–20 (MPTINQLVRKGRHSKVTKSK). The span at 9-18 (RKGRHSKVTK) shows a compositional bias: basic residues.

Belongs to the universal ribosomal protein uS12 family. As to quaternary structure, part of the 30S ribosomal subunit. Contacts proteins S8 and S17. May interact with IF1 in the 30S initiation complex.

In terms of biological role, with S4 and S5 plays an important role in translational accuracy. Interacts with and stabilizes bases of the 16S rRNA that are involved in tRNA selection in the A site and with the mRNA backbone. Located at the interface of the 30S and 50S subunits, it traverses the body of the 30S subunit contacting proteins on the other side and probably holding the rRNA structure together. The combined cluster of proteins S8, S12 and S17 appears to hold together the shoulder and platform of the 30S subunit. This Lactobacillus acidophilus (strain ATCC 700396 / NCK56 / N2 / NCFM) protein is Small ribosomal subunit protein uS12.